The primary structure comprises 1219 residues: N-acetylglucosamine-1-phosphotransferase subunits alpha/beta (1219 aa).

The chain crosses the membrane as a helical span at residues 27–47 (LCFGGLVLMIVSAFQFGEVVV). N-linked (GlcNAc...) asparagine glycosylation is found at asparagine 88, asparagine 119, asparagine 153, asparagine 292, and asparagine 381. Disulfide bonds link cysteine 443–cysteine 466, cysteine 457–cysteine 473, cysteine 508–cysteine 531, and cysteine 522–cysteine 538. 2 LNR repeats span residues 443–478 (CAEG…GSSR) and 508–538 (CNQG…VGDC). Residue aspartate 454 participates in Ca(2+) binding. Asparagine 462 carries an N-linked (GlcNAc...) asparagine glycan. 5 residues coordinate Ca(2+): aspartate 469, aspartate 472, aspartate 519, aspartate 534, and aspartate 537. Residues asparagine 554, asparagine 610, asparagine 617, asparagine 645, asparagine 696, asparagine 726, asparagine 823, and asparagine 974 are each glycosylated (N-linked (GlcNAc...) asparagine). A disordered region spans residues 640–666 (ELPKSNTSTPVRDKEEEPKPTVATPEP). In terms of domain architecture, DMAP1-binding spans 696–804 (NETLLPDEVK…DDVTTKAQSR (109 aa)). One can recognise an EF-hand domain in the interval 970–1005 (VQQLNISEVFDEIDTDHSGVLSDREIRTLATRIHEL). Residues aspartate 983, aspartate 985, serine 987, and glutamate 994 each contribute to the Ca(2+) site. N-linked (GlcNAc...) asparagine glycosylation is found at asparagine 1021, asparagine 1029, and asparagine 1094. The chain crosses the membrane as a helical span at residues 1180–1200 (VLVTLVVFTVMSFFAEQLVML).

It belongs to the stealth family. As to quaternary structure, hexamer of two alpha, two beta and two gamma (GNPTG) subunits; disulfide-linked. The alpha and/or the beta subunits of the enzyme constitute the catalytic subunits. Post-translationally, the alpha- and beta-subunits are generated by a proteolytic cleavage by mbtps1 protease at the Gln-893-Asp-894 bond.

It localises to the golgi apparatus membrane. It catalyses the reaction N(4)-[alpha-D-mannosyl-(1-&gt;2)-alpha-D-mannosyl-(glycan)]-L-asparaginyl-[protein] + UDP-N-acetyl-alpha-D-glucosamine = N(4)-[6-(N-acetyl-alpha-D-glucosaminyl-1-phospho)-alpha-D-mannosyl-(1-&gt;2)-alpha-D-mannosyl-(glycan)]-L-asparaginyl-[protein] + UMP + H(+). Its function is as follows. Catalyzes the formation of mannose 6-phosphate (M6P) markers on high mannose type oligosaccharides in the Golgi apparatus. M6P residues are required to bind to the M6P receptors (MPR), which mediate the vesicular transport of lysosomal enzymes to the endosomal/prelysosomal compartment. This Danio rerio (Zebrafish) protein is N-acetylglucosamine-1-phosphotransferase subunits alpha/beta (gnptab).